Reading from the N-terminus, the 423-residue chain is COUP transcription factor 1 (423 aa).

Residues 1-81 form a disordered region; it reads MAMVVSSWRD…QGPPGSGQSQ (81 aa). A compositionally biased stretch (low complexity) spans 39-67; it reads EQQQQAGSGAPHTPQTPGQPGAPATPGTA. The segment at residues 83–158 is a DNA-binding region (nuclear receptor); that stretch reads HIECVVCGDK…VGMRREAVQR (76 aa). NR C4-type zinc fingers lie at residues 86-106 and 122-146; these read CVVC…CEGC and CRAN…LKKC. Residues 184–410 enclose the NR LBD domain; that stretch reads YLSGYISLLL…TLIRDMLLSG (227 aa).

This sequence belongs to the nuclear hormone receptor family. NR2 subfamily. Binds DNA as dimer; homodimer and probable heterodimer with NR2F6. Interacts with GTF2B; this interaction is direct. Interacts with COPS2.

It localises to the nucleus. Functionally, coup (chicken ovalbumin upstream promoter) transcription factor binds to the ovalbumin promoter and, in conjunction with another protein (S300-II) stimulates initiation of transcription. Binds to both direct repeats and palindromes of the 5'-AGGTCA-3' motif. Represses transcriptional activity of LHCG. The chain is COUP transcription factor 1 (NR2F1) from Homo sapiens (Human).